The sequence spans 159 residues: Transcriptional repressor NrdR (159 aa).

The segment at 3–34 is a zinc-finger region; that stretch reads CPFCHTPDTSVIDSRVSEEGDRIRRRRRCPHC. Residues 49 to 139 form the ATP-cone domain; that stretch reads PQVVKQDGNR…VYRSFQGAAD (91 aa).

It belongs to the NrdR family. Requires Zn(2+) as cofactor.

Its function is as follows. Negatively regulates transcription of bacterial ribonucleotide reductase nrd genes and operons by binding to NrdR-boxes. This chain is Transcriptional repressor NrdR, found in Nitrosospira multiformis (strain ATCC 25196 / NCIMB 11849 / C 71).